Reading from the N-terminus, the 332-residue chain is F-box/SPRY domain-containing protein 1 (332 aa).

Positions 1-10 (MTENNEETIV) are enriched in acidic residues. Residues 1-81 (MTENNEETIV…RRSPRRPEVS (81 aa)) are disordered. Polar residues predominate over residues 15 to 24 (CNLTSSTPMK). Residues 79 to 127 (EVSASRLPLKVLNQIFQYLSLKDLRSAMLTCHSWNNALSMEDSDIWQQL) form the F-box domain. In terms of domain architecture, B30.2/SPRY spans 138–330 (SDPFLFVELR…VTMVYVGSPQ (193 aa)).

This sequence belongs to the FBXO45/Fsn family. Component of an SCF (SKP1-CUL1-F-box protein) E3 ubiquitin ligase complex composed of cul-1, fsn-1, rpm-1 and skr-1. Interacts (via SPRY domain) with scd-2 (via cytoplasmic domain). Interacts (via SPRY domain) with convertase egl-3 (via C-terminus).

Its subcellular location is the synapse. It participates in protein modification; protein ubiquitination. In terms of biological role, component of a SCF (SKP1-CUL1-F-box protein) E3 ubiquitin ligase complex which is required for the restriction and/or maturation of synapses in GABAergic neuromuscular junction (NMJ) presynaptic neurons. Promotes NRJ synapse development and synaptic transmission by negatively regulating the daf-2/InsR pathway in muscles. By targeting convertase egl-3 for degradation, negatively modulates insulin-like protein ins-4 and ins-6 processing. May stabilize synapse formation by promoting the down-regulation of scd-2. Regulates axon termination in PLM and ALM neurons. This chain is F-box/SPRY domain-containing protein 1 (fsn-1), found in Caenorhabditis briggsae.